Consider the following 555-residue polypeptide: Wee1-like protein kinase 2 (555 aa).

The tract at residues 1–112 (MADTETDQGL…NFSTPKNSLG (112 aa)) is disordered. Serine 15 bears the Phosphoserine; by CaMK2 and PKA mark. Polar residues predominate over residues 26 to 41 (EGQMTAQDIGGAQSQK). Residues 57–72 (TRDELHTSLSRDKESP) are compositionally biased toward basic and acidic residues. Phosphoserine is present on serine 71. The span at 102 to 112 (TNFSTPKNSLG) shows a compositional bias: polar residues. The Nuclear localization signal signature appears at 167–169 (KRK). In terms of domain architecture, Protein kinase spans 208 to 485 (FFEIEKIGVG…ARSRILWPFL (278 aa)). ATP contacts are provided by residues 214-222 (IGVGEFGTV) and lysine 237. The Nuclear export signal motif lies at 310 to 324 (KLKDILLQISLGLKY). The active-site Proton acceptor is aspartate 334. Mg(2+) contacts are provided by asparagine 339 and aspartate 375. Residues 488–514 (TDELQKQLNLEKSKTATLKRELKKARH) are a coiled coil.

This sequence belongs to the protein kinase superfamily. Ser/Thr protein kinase family. WEE1 subfamily. In terms of processing, phosphorylated by PKA at Ser-15 in vitro, leading to activate kinase activity. Phosphorylation at Ser-15 by CaMK2, leading to increase its activity and promote metaphase II exit during egg activation. As to expression, ovary-specific.

It is found in the cytoplasm. The protein resides in the nucleus. It catalyses the reaction L-tyrosyl-[protein] + ATP = O-phospho-L-tyrosyl-[protein] + ADP + H(+). Functionally, oocyte-specific protein tyrosine kinase that phosphorylates and inhibits CDK1 and acts as a key regulator of meiosis during both prophase I and metaphase II. Required to maintain meiotic arrest in oocytes during the germinal vesicle (GV) stage, a long period of quiescence at dictyate prophase I, by phosphorylating CDK1 at 'Tyr-15', leading to inhibit CDK1 activity and prevent meiotic reentry. Also required for metaphase II exit during egg activation by phosphorylating CDK1 at 'Tyr-15', to ensure exit from meiosis in oocytes and promote pronuclear formation. The sequence is that of Wee1-like protein kinase 2 (Wee2) from Mus musculus (Mouse).